A 787-amino-acid polypeptide reads, in one-letter code: Endonuclease MutS2 (787 aa).

Residue 335-342 coordinates ATP; that stretch reads GPNTGGKT. In terms of domain architecture, Smr spans 712-787; that stretch reads LDLRGERYED…GLGNTVIELK (76 aa).

The protein belongs to the DNA mismatch repair MutS family. MutS2 subfamily. As to quaternary structure, homodimer. Binds to stalled ribosomes, contacting rRNA.

Endonuclease that is involved in the suppression of homologous recombination and thus may have a key role in the control of bacterial genetic diversity. Functionally, acts as a ribosome collision sensor, splitting the ribosome into its 2 subunits. Detects stalled/collided 70S ribosomes which it binds and splits by an ATP-hydrolysis driven conformational change. Acts upstream of the ribosome quality control system (RQC), a ribosome-associated complex that mediates the extraction of incompletely synthesized nascent chains from stalled ribosomes and their subsequent degradation. Probably generates substrates for RQC. The protein is Endonuclease MutS2 of Shouchella clausii (strain KSM-K16) (Alkalihalobacillus clausii).